Here is a 300-residue protein sequence, read N- to C-terminus: tRNA dimethylallyltransferase (300 aa).

ATP is bound at residue 18–25; the sequence is GPTATGKS. Residue 20–25 coordinates substrate; it reads TATGKS. Residues 43 to 46 form an interaction with substrate tRNA region; the sequence is DSRQ.

This sequence belongs to the IPP transferase family. As to quaternary structure, monomer. It depends on Mg(2+) as a cofactor.

The enzyme catalyses adenosine(37) in tRNA + dimethylallyl diphosphate = N(6)-dimethylallyladenosine(37) in tRNA + diphosphate. In terms of biological role, catalyzes the transfer of a dimethylallyl group onto the adenine at position 37 in tRNAs that read codons beginning with uridine, leading to the formation of N6-(dimethylallyl)adenosine (i(6)A). The protein is tRNA dimethylallyltransferase of Cyanothece sp. (strain PCC 7425 / ATCC 29141).